The sequence spans 257 residues: MLILAGLGLYDENDMTLKTLKFAKKAEKIYAEFYTAVLTGTTTEKIEEVLGKKIHVLSRKDVEYNGYKLIEEAKDKDIMFLTAGDPMVATTHVDLAIEAKKKGIEVLIINAPSIYSAVGITGLQLYKFGKTTSIVFPEENYFPETPYNVIKENLERGLHTLCLLDIRIDENEKRFMTANEGLKVLLELENRKKEGIINEDTKAVVVARAGSLKPKLVYGKIKDLINYDFGEPLHCIIIPGKLHFMEEDALKYLCENI.

Residues L9, D85, V88, 113–114, L164, A209, and H234 each bind S-adenosyl-L-methionine; that span reads SI.

The protein belongs to the diphthine synthase family. As to quaternary structure, homodimer.

The catalysed reaction is 2-[(3S)-amino-3-carboxypropyl]-L-histidyl-[translation elongation factor 2] + 3 S-adenosyl-L-methionine = diphthine-[translation elongation factor 2] + 3 S-adenosyl-L-homocysteine + 3 H(+). Its pathway is protein modification; peptidyl-diphthamide biosynthesis. In terms of biological role, S-adenosyl-L-methionine-dependent methyltransferase that catalyzes the trimethylation of the amino group of the modified target histidine residue in translation elongation factor 2 (EF-2), to form an intermediate called diphthine. The three successive methylation reactions represent the second step of diphthamide biosynthesis. The chain is Diphthine synthase from Methanocaldococcus jannaschii (strain ATCC 43067 / DSM 2661 / JAL-1 / JCM 10045 / NBRC 100440) (Methanococcus jannaschii).